Here is an 800-residue protein sequence, read N- to C-terminus: Transcription initiation factor TFIID subunit 5 (800 aa).

The tract at residues 1-74 (MAALAEEQTE…KPTVAVSAAA (74 aa)) is disordered. Gly residues predominate over residues 30–50 (DGAGEGSGGTTNNGPNGGGGN). The LisH domain maps to 92–124 (HDRQTLLAVLQFLRQSKLREAEEALRREAGLLE). The disordered stretch occupies residues 153–189 (ASAPGPAAPDPPGTGASGATVVSGSASGPAAPGKVGS). Residues 165-189 (GTGASGATVVSGSASGPAAPGKVGS) are compositionally biased toward low complexity. The NTD2; involved in homo-dimerization; also involved in TFIID-TFIIF contacts in the RNA Pol II pre-initiation complex (PIC) stretch occupies residues 194 to 340 (DQPDVSAVLS…NIVQEHLYID (147 aa)). Residues 384–395 (VPLDDEDEEGEN) show a composition bias toward acidic residues. The tract at residues 384–438 (VPLDDEDEEGENEEGKPKKKKPKKDSIGSKSKKQDPNAPPQNRIPLPELKDSDKL) is disordered. A compositionally biased stretch (basic and acidic residues) spans 407-418 (KDSIGSKSKKQD). WD repeat units follow at residues 468–507 (NAYQGLTAVDVTDDSSLIAGGFADSTVRVWSVTPKKLRSV), 541–580 (GHSGPVYGASFSPDRNYLLSSSEDGTVRLWSLQTFTCLVG), 583–624 (GHNY…RIFA), 625–666 (GHLA…RIFT), 667–706 (GHKGPIHSLTFSPNGRFLATGATDGRVLLWDIGHGLMVGE), and 709–748 (GHTDTVCSLRFSRDGEILASGSMDNTVRLWDAIKAFEDLE).

This sequence belongs to the WD repeat TAF5 family. Homodimer. Component of the TFIID basal transcription factor complex, composed of TATA-box-binding protein TBP, and a number of TBP-associated factors (TAFs), including TAF1, TAF2, TAF3, TAF4, TAF5, TAF6, TAF7, TAF8, TAF9, TAF10, TAF11, TAF12 and TAF13. The TFIID complex structure can be divided into 3 modules TFIID-A, TFIID-B, and TFIID-C. TAF5 forms the TFIID-A module together with TAF3 and TBP, and in TFIID-B with TAF8. Component of the TFTC-HAT complex, at least composed of TAF5L, TAF6L, TADA3L, SUPT3H/SPT3, TAF2, TAF4, TAF5, GCN5L2/GCN5, TAF10 and TRRAP. TBP is not part of the TFTC-HAT complex. Interacts strongly with the histone H4-related TAF6 and the histone H3-related TAF9, as well as a stable complex comprised of both TAF6 and TAF9. Apparently weaker interactions with TBP, TAF1, TAF11, and TAF12, but not TAF7, also have been observed. As to quaternary structure, (Microbial infection) Interacts with SV40 Large T antigen.

Its subcellular location is the nucleus. Functionally, the TFIID basal transcription factor complex plays a major role in the initiation of RNA polymerase II (Pol II)-dependent transcription. TFIID recognizes and binds promoters with or without a TATA box via its subunit TBP, a TATA-box-binding protein, and promotes assembly of the pre-initiation complex (PIC). The TFIID complex consists of TBP and TBP-associated factors (TAFs), including TAF1, TAF2, TAF3, TAF4, TAF5, TAF6, TAF7, TAF8, TAF9, TAF10, TAF11, TAF12 and TAF13. The TFIID complex structure can be divided into 3 modules TFIID-A, TFIID-B, and TFIID-C. TAF5 is involved in two modules of TFIID, in TFIID-A together with TAF3 and TBP, and in TFIID-B with TAF8. Involved in contacts between TFIID and TFIIF in the PIC. This Homo sapiens (Human) protein is Transcription initiation factor TFIID subunit 5 (TAF5).